The following is a 317-amino-acid chain: Aspartate carbamoyltransferase catalytic subunit (317 aa).

2 residues coordinate carbamoyl phosphate: R65 and T66. L-aspartate is bound at residue K93. 3 residues coordinate carbamoyl phosphate: R115, H145, and Q148. The L-aspartate site is built by R178 and R233. Residues G274 and P275 each contribute to the carbamoyl phosphate site.

The protein belongs to the aspartate/ornithine carbamoyltransferase superfamily. ATCase family. In terms of assembly, heterododecamer (2C3:3R2) of six catalytic PyrB chains organized as two trimers (C3), and six regulatory PyrI chains organized as three dimers (R2).

The catalysed reaction is carbamoyl phosphate + L-aspartate = N-carbamoyl-L-aspartate + phosphate + H(+). It functions in the pathway pyrimidine metabolism; UMP biosynthesis via de novo pathway; (S)-dihydroorotate from bicarbonate: step 2/3. Catalyzes the condensation of carbamoyl phosphate and aspartate to form carbamoyl aspartate and inorganic phosphate, the committed step in the de novo pyrimidine nucleotide biosynthesis pathway. The protein is Aspartate carbamoyltransferase catalytic subunit of Methylobacillus flagellatus (strain ATCC 51484 / DSM 6875 / VKM B-1610 / KT).